Reading from the N-terminus, the 25-residue chain is MRDKWRKKRVRRLKRKRRKMRARSK.

Residues 1-25 form a disordered region; the sequence is MRDKWRKKRVRRLKRKRRKMRARSK.

Belongs to the eukaryotic ribosomal protein eS32 family. Component of the large ribosomal subunit (LSU). Mature yeast ribosomes consist of a small (40S) and a large (60S) subunit. The 40S small subunit contains 1 molecule of ribosomal RNA (18S rRNA) and at least 33 different proteins. The large 60S subunit contains 3 rRNA molecules (25S, 5.8S and 5S rRNA) and at least 46 different proteins.

The protein resides in the cytoplasm. It is found in the nucleus. In terms of biological role, component of the ribosome, a large ribonucleoprotein complex responsible for the synthesis of proteins in the cell. The small ribosomal subunit (SSU) binds messenger RNAs (mRNAs) and translates the encoded message by selecting cognate aminoacyl-transfer RNA (tRNA) molecules. The large subunit (LSU) contains the ribosomal catalytic site termed the peptidyl transferase center (PTC), which catalyzes the formation of peptide bonds, thereby polymerizing the amino acids delivered by tRNAs into a polypeptide chain. The nascent polypeptides leave the ribosome through a tunnel in the LSU and interact with protein factors that function in enzymatic processing, targeting, and the membrane insertion of nascent chains at the exit of the ribosomal tunnel. The chain is Small ribosomal subunit protein eS32A (rpl4101) from Schizosaccharomyces pombe (strain 972 / ATCC 24843) (Fission yeast).